Here is a 302-residue protein sequence, read N- to C-terminus: 4-hydroxy-tetrahydrodipicolinate synthase (302 aa).

Threonine 56 provides a ligand contact to pyruvate. The active-site Proton donor/acceptor is tyrosine 145. Catalysis depends on lysine 173, which acts as the Schiff-base intermediate with substrate. Valine 215 is a binding site for pyruvate.

Belongs to the DapA family. Homotetramer; dimer of dimers.

Its subcellular location is the cytoplasm. The enzyme catalyses L-aspartate 4-semialdehyde + pyruvate = (2S,4S)-4-hydroxy-2,3,4,5-tetrahydrodipicolinate + H2O + H(+). It participates in amino-acid biosynthesis; L-lysine biosynthesis via DAP pathway; (S)-tetrahydrodipicolinate from L-aspartate: step 3/4. Functionally, catalyzes the condensation of (S)-aspartate-beta-semialdehyde [(S)-ASA] and pyruvate to 4-hydroxy-tetrahydrodipicolinate (HTPA). This is 4-hydroxy-tetrahydrodipicolinate synthase from Prochlorococcus marinus subsp. pastoris (strain CCMP1986 / NIES-2087 / MED4).